The sequence spans 38 residues: Potassium channel toxin alpha-KTx 6.4 (38 aa).

4 cysteine pairs are disulfide-bonded: Cys-6–Cys-27, Cys-12–Cys-32, Cys-16–Cys-34, and Cys-22–Cys-37.

It belongs to the short scorpion toxin superfamily. Potassium channel inhibitor family. Alpha-KTx 06 subfamily. Expressed by the venom gland.

Its subcellular location is the secreted. In terms of biological role, potently, completely and reversibly blocks voltage-gated potassium channel Kv1.2/KCNA2 and Shaker B (Sh). Also blocks small conductance (SK) calcium-activated potassium channel (KCNN). This Pandinus imperator (Emperor scorpion) protein is Potassium channel toxin alpha-KTx 6.4.